We begin with the raw amino-acid sequence, 541 residues long: MKMSKEGKQSKRTLLITGLIIAMFFSALDGTIVGTAMPKIVGDLGGLSMMTWLTTAYLLTSTTIVPIAGKLADLLGRRIVYVSGLIIFMAASALCGMANNMTELIIFRGLQGIGGGIMMPMAMIVIGDLFTGKQRAKFQGVFGAIYGLASVIGPQIGGWIVDSLNWKWVFYINLPVGIIAVIFIARGLQGRQQTGPINFDIAGIFTMIVGVVSLLLALSFGGKDYAWDSWQILGLFALALIGIVSFIIVESKAKEPILPMYLFKNRTFTFLNLIGFFMSIGMFGAITFVPFFMQGIVGVSASESGTIMTPMMISMIITSIIGGQLVYKIGIKPQIITGMLVMAGGFLLLTTLDLDTSKLVATSFMAIIGLGMGLVMPILTLALQESFSKEELGVVTSSSQFFRSIGGTFGITMLGAVMNARSGNLLTDKLVPYLDSLPAQASSFAAQLKGMIDTNPQGLLQSLFSPDAVKQIPAAFSSHIVPILKTSLMDSLHSVFYTGLIFIAVGAVFTLFLKPIKLSNKKAEDQQEKEKAAKAVESPSH.

Transmembrane regions (helical) follow at residues 14–34 (LLIT…TIVG), 40–60 (IVGD…YLLT), 79–99 (IVYV…GMAN), 112–132 (GIGG…LFTG), 141–161 (VFGA…GWIV), 168–188 (WVFY…ARGL), 201–221 (IAGI…LSFG), 229–249 (SWQI…FIIV), 273–293 (LIGF…PFFM), 307–327 (IMTP…QLVY), 329–349 (IGIK…FLLL), 359–379 (LVAT…MPIL), 401–420 (FFRS…VMNA), and 492–512 (LHSV…FTLF).

It belongs to the major facilitator superfamily. EmrB family.

The protein resides in the cell membrane. Functionally, multidrug efflux transporter. Contributes to resistance to several antibiotics, including fusidic acid, novobiocin, streptomycin and actinomycin, possibly by pumping these structurally unrelated antibiotics out of cells. The chain is Multidrug transporter protein MdtP from Bacillus subtilis (strain 168).